Here is a 363-residue protein sequence, read N- to C-terminus: Ribonuclease P protein subunit p40 (363 aa).

In terms of assembly, component of nuclear RNase P and RNase MRP ribonucleoproteins. RNase P consists of a catalytic RNA moiety and about 10 protein subunits; POP1, POP4, POP5, POP7, RPP14, RPP21, RPP25, RPP30, RPP38 and RPP40. Within the RNase P complex, POP1, POP7 and RPP25 form the 'finger' subcomplex, POP5, RPP14, RPP40 and homodimeric RPP30 form the 'palm' subcomplex, and RPP21, POP4 and RPP38 form the 'wrist' subcomplex. All subunits of the RNase P complex interact with the catalytic RNA. Several subunits of RNase P are also part of the RNase MRP complex. RNase MRP consists of a catalytic RNA moiety and about 8 protein subunits; POP1, POP7, RPP25, RPP30, RPP38, RPP40 and possibly also POP4 and POP5.

The protein resides in the nucleus. It localises to the nucleolus. Its function is as follows. Component of ribonuclease P, a ribonucleoprotein complex that generates mature tRNA molecules by cleaving their 5'-ends. Also a component of the MRP ribonuclease complex, which cleaves pre-rRNA sequences. The chain is Ribonuclease P protein subunit p40 (RPP40) from Homo sapiens (Human).